We begin with the raw amino-acid sequence, 117 residues long: Large-conductance mechanosensitive channel (117 aa).

3 consecutive transmembrane segments (helical) span residues Glu7–Phe27, Ile30–Val50, and Gly64–Val84.

This sequence belongs to the MscL family. As to quaternary structure, homopentamer.

The protein localises to the cell membrane. Channel that opens in response to stretch forces in the membrane lipid bilayer. May participate in the regulation of osmotic pressure changes within the cell. This is Large-conductance mechanosensitive channel from Staphylococcus haemolyticus (strain JCSC1435).